The sequence spans 759 residues: LPS-assembly protein LptD (759 aa).

The N-terminal stretch at 1 to 45 is a signal peptide; sequence MKPLKLELNPRDFNHYQAAFLPYRMKIKQPLHVLCFSVCSLSAVA.

It belongs to the LptD family. As to quaternary structure, component of the lipopolysaccharide transport and assembly complex. Interacts with LptE and LptA.

It localises to the cell outer membrane. Its function is as follows. Together with LptE, is involved in the assembly of lipopolysaccharide (LPS) at the surface of the outer membrane. This Pseudoalteromonas atlantica (strain T6c / ATCC BAA-1087) protein is LPS-assembly protein LptD.